The primary structure comprises 1541 residues: WD repeat-containing protein 62 (1541 aa).

The residue at position 2 (alanine 2) is an N-acetylalanine. Serine 33 is subject to Phosphoserine. Position 46 is a phosphothreonine (threonine 46). WD repeat units lie at residues 109 to 150 (TARK…QVAE), 153 to 194 (GHKY…VVAS), 196 to 234 (KVSCRVIALSFSEDSSYFVTVGNRHVRFWFLEVSTEAKV), 291 to 330 (INLKVSLSSCLCVSQELIFCGCTDGIVRIFQAHSLHYLAN), 357 to 396 (AVYPDTVALTFDPNHQWLSCVYKDHSIYIWDVKDINKVGK), 402 to 450 (FHSS…DSHW), 490 to 529 (DMKAGVRVMQVSPDGQHLASGDRSGNLRIHELHFMDELVR), 532 to 574 (AHDA…SLEQ), 578 to 618 (DHSS…DGLH), 626 to 665 (AEKTTLYDMDIDITQKYVAVACQDRNVRVYNTVNGKQKKC), 671 to 713 (GDEG…KMFG), and 714 to 752 (HSEIITGMKFTYDCRHLITVSGDSCVFIWHLGPEITNCM). Serine 501 carries the phosphoserine modification. Disordered stretches follow at residues 762–820 (REQP…KESL) and 911–1050 (LSQS…LPQT). Positions 770-780 (KDGKWSRDPRQ) are enriched in basic and acidic residues. Positions 781 to 795 (ETCTSMPSEISLSPG) are enriched in polar residues. Over residues 797 to 809 (QTEDELEEECEPE) the composition is skewed to acidic residues. One copy of the WD 13 repeat lies at 803 to 846 (EEECEPEELLKTPSKESLDSDPRCLLTNGKLPLWAKRLLGDDDV). Basic and acidic residues predominate over residues 810–820 (ELLKTPSKESL). A compositionally biased stretch (low complexity) spans 937–948 (VSELLCSLESEV). Serine 943 is subject to Phosphoserine. Pro residues predominate over residues 1008 to 1026 (PPRPDPDPPFDVAVPPAPG). Threonine 1050 is subject to Phosphothreonine. A phosphoserine mark is found at serine 1095, serine 1125, and serine 1151. Disordered stretches follow at residues 1133–1153 (LAGSQPRAEPLRAGTGYTSPG) and 1185–1212 (SSSSVPPTDKTPPTPTALPTPGLAQGVH). Residues 1138–1180 (PRAEPLRAGTGYTSPGRTNVLSAGKAEEPLEAWSPLTSCLTGL) form a WD 14 repeat. Positions 1193–1202 (DKTPPTPTAL) are enriched in pro residues. Serine 1235, serine 1255, and serine 1256 each carry phosphoserine. The tract at residues 1273–1293 (TVTPSSDSEGQEPALPSRGNH) is disordered. Threonine 1275 is subject to Phosphothreonine.

As to quaternary structure, can form homodimers (via C-terminus). Interacts (via C-terminus) with MAPKBP1 (via C-terminus). Interacts with CDK5RAP2, CEP152, CEP63 and KIAA0753. CEP63, CDK5RAP2, CEP152, WDR62 are proposed to form a stepwise assembled complex at the centrosome forming a ring near parental centrioles.

The protein resides in the nucleus. Its subcellular location is the cytoplasm. It localises to the cytoskeleton. The protein localises to the spindle pole. It is found in the microtubule organizing center. The protein resides in the centrosome. Its subcellular location is the centriole. In terms of biological role, required for cerebral cortical development. Plays a role in neuronal proliferation and migration. Plays a role in mother-centriole-dependent centriole duplication; the function seems also to involve CEP152, CDK5RAP2 and CEP63 through a stepwise assembled complex at the centrosome that recruits CDK2 required for centriole duplication. The polypeptide is WD repeat-containing protein 62 (WDR62) (Sus scrofa (Pig)).